A 403-amino-acid chain; its full sequence is tRNA pseudouridine synthase D (403 aa).

A compositionally biased stretch (basic and acidic residues) spans 1–10 (MTVQVQDHDI). Residues 1–24 (MTVQVQDHDITTAADTAKLPQPMQ) form a disordered region. Asp-92 functions as the Nucleophile in the catalytic mechanism. The TRUD domain occupies 192–354 (GVPNYFGPQR…IKAQRRALRL (163 aa)). The disordered stretch occupies residues 217-240 (ARPVPESRPQPNKGKRKRVPREQN).

It belongs to the pseudouridine synthase TruD family.

It carries out the reaction uridine(13) in tRNA = pseudouridine(13) in tRNA. Responsible for synthesis of pseudouridine from uracil-13 in transfer RNAs. This Psychrobacter arcticus (strain DSM 17307 / VKM B-2377 / 273-4) protein is tRNA pseudouridine synthase D.